The sequence spans 240 residues: GATA transcription factor 4 (240 aa).

The interval isoleucine 104–glycine 124 is disordered. The Nuclear localization signal signature appears at lysine 109–arginine 116. The GATA-type zinc-finger motif lies at alanine 154–leucine 208.

The protein belongs to the type IV zinc-finger family. Class A subfamily. In terms of tissue distribution, expressed in roots, flowers and leaves, and to a lower extent in stems.

It localises to the nucleus. Its function is as follows. Transcriptional activator that specifically binds 5'-GATA-3' or 5'-GAT-3' motifs within gene promoters. May be involved in the regulation of some light-responsive genes. In Arabidopsis thaliana (Mouse-ear cress), this protein is GATA transcription factor 4 (GATA4).